A 642-amino-acid polypeptide reads, in one-letter code: Eukaryotic translation initiation factor 2A (642 aa).

WD repeat units lie at residues 69-115 (MKLS…KKDC), 186-224 (TYLISPAEHPTICTFTPEKGGKPAQLIIWALSEGKITKK), 289-331 (LTTG…HSLP), and 374-419 (FDAT…VFVK). The interval 485–593 (ISQHPSREAS…KETSPEEKKI (109 aa)) is disordered. Low complexity-rich tracts occupy residues 493–507 (ASSNGNGSKAKAGGA) and 563–583 (TSPDSTPAPSAPASTNAPTNN). S564, S567, and S572 each carry phosphoserine.

It belongs to the WD repeat EIF2A family. Ubiquitinated, probably leading to its degradation. May explain why it has a short half-life of 17 minutes.

Functionally, functions in the early steps of protein synthesis of a small number of specific mRNAs. Acts by directing the binding of methionyl-tRNAi to 40S ribosomal subunits. In contrast to the eIF-2 complex, it binds methionyl-tRNAi to 40S subunits in a codon-dependent manner, whereas the eIF-2 complex binds methionyl-tRNAi to 40S subunits in a GTP-dependent manner. Specifically associates with both 40S subunits and 80S ribosomes. This Saccharomyces cerevisiae (strain ATCC 204508 / S288c) (Baker's yeast) protein is Eukaryotic translation initiation factor 2A.